A 297-amino-acid polypeptide reads, in one-letter code: tRNA (guanine(37)-N(1))/4-demethylwyosine(37)-methyltransferase Taw22 (297 aa).

Residues arginine 89, phenylalanine 106, and 128–129 contribute to the S-adenosyl-L-methionine site; that span reads EL.

This sequence belongs to the class I-like SAM-binding methyltransferase superfamily. TRM5/TYW2 family.

The protein resides in the cytoplasm. The enzyme catalyses guanosine(37) in tRNA + S-adenosyl-L-methionine = N(1)-methylguanosine(37) in tRNA + S-adenosyl-L-homocysteine + H(+). It catalyses the reaction 4-demethylwyosine(37) in tRNA(Phe) + S-adenosyl-L-methionine = isowyosine(37) in tRNA(Phe) + S-adenosyl-L-homocysteine + H(+). In terms of biological role, catalyzes both the N1-methylation of guanosine and the C7-methylation of 4-demethylwyosine (imG-14) at position 37 in tRNA(Phe). The chain is tRNA (guanine(37)-N(1))/4-demethylwyosine(37)-methyltransferase Taw22 from Nanoarchaeum equitans (strain Kin4-M).